The sequence spans 78 residues: Small ribosomal subunit protein bS18 (78 aa).

The protein belongs to the bacterial ribosomal protein bS18 family. Part of the 30S ribosomal subunit. Forms a tight heterodimer with protein bS6.

In terms of biological role, binds as a heterodimer with protein bS6 to the central domain of the 16S rRNA, where it helps stabilize the platform of the 30S subunit. The chain is Small ribosomal subunit protein bS18 from Lactobacillus delbrueckii subsp. bulgaricus (strain ATCC BAA-365 / Lb-18).